Consider the following 533-residue polypeptide: Retinoid isomerohydrolase (533 aa).

N-acetylserine is present on Ser2. Phosphothreonine occurs at positions 101 and 105. Cys112 is lipidated: S-palmitoyl cysteine; in membrane form. Lys113 carries the post-translational modification N6-acetyllysine. Position 117 is a phosphoserine (Ser117). His180 serves as a coordination point for Fe cation. Residue Cys231 is the site of S-palmitoyl cysteine; in membrane form attachment. Fe cation is bound by residues His241 and His313. 2 S-palmitoyl cysteine; in membrane form lipidation sites follow: Cys329 and Cys330. His527 lines the Fe cation pocket.

Belongs to the carotenoid oxygenase family. In terms of assembly, interacts with MYO7A; this mediates light-dependent intracellular transport of RPE65. Fe(2+) is required as a cofactor. In terms of processing, palmitoylation by LRAT regulates ligand binding specificity; the palmitoylated form (membrane form) specifically binds all-trans-retinyl-palmitate, while the soluble unpalmitoylated form binds all-trans-retinol (vitamin A). As to expression, retinal pigment epithelium specific.

It is found in the cytoplasm. It localises to the cell membrane. Its subcellular location is the microsome membrane. It carries out the reaction an all-trans-retinyl ester + H2O = 11-cis-retinol + a fatty acid + H(+). The enzyme catalyses lutein = (3R,3'S)-zeaxanthin. It catalyses the reaction all-trans-retinyl hexadecanoate + H2O = 11-cis-retinol + hexadecanoate + H(+). Its function is as follows. Critical isomerohydrolase in the retinoid cycle involved in regeneration of 11-cis-retinal, the chromophore of rod and cone opsins. Catalyzes the cleavage and isomerization of all-trans-retinyl fatty acid esters to 11-cis-retinol which is further oxidized by 11-cis retinol dehydrogenase to 11-cis-retinal for use as visual chromophore. Essential for the production of 11-cis retinal for both rod and cone photoreceptors. Also capable of catalyzing the isomerization of lutein to meso-zeaxanthin an eye-specific carotenoid. The soluble form binds vitamin A (all-trans-retinol), making it available for LRAT processing to all-trans-retinyl ester. The membrane form, palmitoylated by LRAT, binds all-trans-retinyl esters, making them available for IMH (isomerohydrolase) processing to all-cis-retinol. The soluble form is regenerated by transferring its palmitoyl groups onto 11-cis-retinol, a reaction catalyzed by LRAT. The protein is Retinoid isomerohydrolase (RPE65) of Canis lupus familiaris (Dog).